The sequence spans 214 residues: Pyridoxine/pyridoxamine 5'-phosphate oxidase (214 aa).

Substrate-binding positions include 9-12 (RKDY) and K67. FMN-binding positions include 62 to 67 (RMVLLK), 77 to 78 (FT), R83, K84, and Q106. Substrate contacts are provided by Y124, R128, and S132. FMN is bound by residues 141–142 (QS) and W186. 192–194 (RLH) is a substrate binding site. R196 is a binding site for FMN.

The protein belongs to the pyridoxamine 5'-phosphate oxidase family. As to quaternary structure, homodimer. Requires FMN as cofactor.

The enzyme catalyses pyridoxamine 5'-phosphate + O2 + H2O = pyridoxal 5'-phosphate + H2O2 + NH4(+). The catalysed reaction is pyridoxine 5'-phosphate + O2 = pyridoxal 5'-phosphate + H2O2. The protein operates within cofactor metabolism; pyridoxal 5'-phosphate salvage; pyridoxal 5'-phosphate from pyridoxamine 5'-phosphate: step 1/1. It participates in cofactor metabolism; pyridoxal 5'-phosphate salvage; pyridoxal 5'-phosphate from pyridoxine 5'-phosphate: step 1/1. Its function is as follows. Catalyzes the oxidation of either pyridoxine 5'-phosphate (PNP) or pyridoxamine 5'-phosphate (PMP) into pyridoxal 5'-phosphate (PLP). This chain is Pyridoxine/pyridoxamine 5'-phosphate oxidase, found in Trichormus variabilis (strain ATCC 29413 / PCC 7937) (Anabaena variabilis).